A 448-amino-acid polypeptide reads, in one-letter code: tRNA-2-methylthio-N(6)-dimethylallyladenosine synthase (448 aa).

Positions 3–119 constitute an MTTase N-terminal domain; the sequence is GRVYVKTHGC…LPEMIDRARD (117 aa). The [4Fe-4S] cluster site is built by Cys12, Cys49, Cys82, Cys156, Cys160, and Cys163. One can recognise a Radical SAM core domain in the interval 142–374; it reads RAEGPTAFVS…QETINANARR (233 aa). Residues 377 to 440 form the TRAM domain; it reads ESMVGTVQRV…PNSLRGELLG (64 aa).

It belongs to the methylthiotransferase family. MiaB subfamily. In terms of assembly, monomer. [4Fe-4S] cluster serves as cofactor.

The protein resides in the cytoplasm. The enzyme catalyses N(6)-dimethylallyladenosine(37) in tRNA + (sulfur carrier)-SH + AH2 + 2 S-adenosyl-L-methionine = 2-methylsulfanyl-N(6)-dimethylallyladenosine(37) in tRNA + (sulfur carrier)-H + 5'-deoxyadenosine + L-methionine + A + S-adenosyl-L-homocysteine + 2 H(+). Functionally, catalyzes the methylthiolation of N6-(dimethylallyl)adenosine (i(6)A), leading to the formation of 2-methylthio-N6-(dimethylallyl)adenosine (ms(2)i(6)A) at position 37 in tRNAs that read codons beginning with uridine. This chain is tRNA-2-methylthio-N(6)-dimethylallyladenosine synthase, found in Alkalilimnicola ehrlichii (strain ATCC BAA-1101 / DSM 17681 / MLHE-1).